We begin with the raw amino-acid sequence, 138 residues long: Large ribosomal subunit protein uL16 (138 aa).

The protein belongs to the universal ribosomal protein uL16 family. Part of the 50S ribosomal subunit.

Functionally, binds 23S rRNA and is also seen to make contacts with the A and possibly P site tRNAs. The chain is Large ribosomal subunit protein uL16 from Gluconacetobacter diazotrophicus (strain ATCC 49037 / DSM 5601 / CCUG 37298 / CIP 103539 / LMG 7603 / PAl5).